A 377-amino-acid chain; its full sequence is Anhydro-N-acetylmuramic acid kinase (377 aa).

14–21 (GTSLDGVD) provides a ligand contact to ATP.

The protein belongs to the anhydro-N-acetylmuramic acid kinase family.

The enzyme catalyses 1,6-anhydro-N-acetyl-beta-muramate + ATP + H2O = N-acetyl-D-muramate 6-phosphate + ADP + H(+). Its pathway is amino-sugar metabolism; 1,6-anhydro-N-acetylmuramate degradation. The protein operates within cell wall biogenesis; peptidoglycan recycling. Catalyzes the specific phosphorylation of 1,6-anhydro-N-acetylmuramic acid (anhMurNAc) with the simultaneous cleavage of the 1,6-anhydro ring, generating MurNAc-6-P. Is required for the utilization of anhMurNAc either imported from the medium or derived from its own cell wall murein, and thus plays a role in cell wall recycling. In Pasteurella multocida (strain Pm70), this protein is Anhydro-N-acetylmuramic acid kinase.